The sequence spans 125 residues: Succinate dehydrogenase cytochrome b560 subunit (125 aa).

A run of 3 helical transmembrane segments spans residues I29–T49, I68–I88, and I104–I124. H83 provides a ligand contact to heme.

Belongs to the cytochrome b560 family. Forms part of complex II containing four subunits: a 70 kDa flavoprotein (FP), a 27 kDa iron-sulfur protein (IP), a cytochrome B and a membrane-anchoring protein. The cofactor is heme.

It localises to the mitochondrion inner membrane. It participates in carbohydrate metabolism; tricarboxylic acid cycle. Functionally, membrane-anchoring subunit of succinate dehydrogenase (SDH) that is involved in complex II of the mitochondrial electron transport chain and is responsible for transferring electrons from succinate to ubiquinone (coenzyme Q). The chain is Succinate dehydrogenase cytochrome b560 subunit (SDH3) from Porphyra purpurea (Red seaweed).